Reading from the N-terminus, the 283-residue chain is Phosphatidylserine decarboxylase proenzyme (283 aa).

Active-site charge relay system; for autoendoproteolytic cleavage activity residues include D88, H145, and S248. S248 (schiff-base intermediate with substrate; via pyruvic acid; for decarboxylase activity) is an active-site residue. S248 bears the Pyruvic acid (Ser); by autocatalysis mark.

It belongs to the phosphatidylserine decarboxylase family. PSD-B subfamily. Prokaryotic type I sub-subfamily. In terms of assembly, heterodimer of a large membrane-associated beta subunit and a small pyruvoyl-containing alpha subunit. It depends on pyruvate as a cofactor. Is synthesized initially as an inactive proenzyme. Formation of the active enzyme involves a self-maturation process in which the active site pyruvoyl group is generated from an internal serine residue via an autocatalytic post-translational modification. Two non-identical subunits are generated from the proenzyme in this reaction, and the pyruvate is formed at the N-terminus of the alpha chain, which is derived from the carboxyl end of the proenzyme. The autoendoproteolytic cleavage occurs by a canonical serine protease mechanism, in which the side chain hydroxyl group of the serine supplies its oxygen atom to form the C-terminus of the beta chain, while the remainder of the serine residue undergoes an oxidative deamination to produce ammonia and the pyruvoyl prosthetic group on the alpha chain. During this reaction, the Ser that is part of the protease active site of the proenzyme becomes the pyruvoyl prosthetic group, which constitutes an essential element of the active site of the mature decarboxylase.

It is found in the cell membrane. It catalyses the reaction a 1,2-diacyl-sn-glycero-3-phospho-L-serine + H(+) = a 1,2-diacyl-sn-glycero-3-phosphoethanolamine + CO2. It functions in the pathway phospholipid metabolism; phosphatidylethanolamine biosynthesis; phosphatidylethanolamine from CDP-diacylglycerol: step 2/2. Its function is as follows. Catalyzes the formation of phosphatidylethanolamine (PtdEtn) from phosphatidylserine (PtdSer). This is Phosphatidylserine decarboxylase proenzyme from Acidovorax ebreus (strain TPSY) (Diaphorobacter sp. (strain TPSY)).